Reading from the N-terminus, the 265-residue chain is MSLSVAEKSYLYDSLASTPSIRPDGRLPHQFRPIEIFTDFLPSSNGSSRIIASDGSECIVSIKSKVVDHHVENELLQVDVDIAGQRDDALVVETITSLLNKVLKSGSGVDSSKLQLTKKYSFKIFVDVLVISSHSHPVSLISFAIYSALNSTYLPKLISAFDDLEVEELPTFHDYDMVKLDINPPLVFILAVVGNNMLLDPAANESEVANNGLIISWSNGKITSPIRSVALNDSNVKSFKPHLLKQGLAMVEKYAPDVVRSLENL.

The protein belongs to the RNase PH family. Component of the RNA exosome complex. Specifically part of the catalytically inactive RNA exosome core complex (Exo-9) which may associate with the catalytic subunits RRP6 and DIS3 in cytoplasmic- and nuclear-specific RNA exosome complex forms. Exo-9 is formed by a hexameric base ring of RNase PH domain-containing subunits and a cap ring consisting of CSL4, RRP4 and RRP40.

It localises to the cytoplasm. The protein resides in the nucleus. The protein localises to the nucleolus. Functionally, non-catalytic component of the RNA exosome complex which has 3'-&gt;5' exoribonuclease activity and participates in a multitude of cellular RNA processing and degradation events. In the nucleus, the RNA exosome complex is involved in proper maturation of stable RNA species such as rRNA, snRNA and snoRNA, in the elimination of RNA processing by-products and non-coding 'pervasive' transcripts, such as antisense RNA species and cryptic unstable transcripts (CUTs), and of mRNAs with processing defects, thereby limiting or excluding their export to the cytoplasm. In the cytoplasm, the RNA exosome complex is involved in general mRNA turnover and in RNA surveillance pathways, preventing translation of aberrant mRNAs. The catalytic inactive RNA exosome core complex of 9 subunits (Exo-9) is proposed to play a pivotal role in the binding and presentation of RNA for ribonucleolysis, and to serve as a scaffold for the association with catalytic subunits and accessory proteins or complexes. RRP42 is part of the hexameric ring of RNase PH domain-containing subunits proposed to form a central channel which threads RNA substrates for degradation. This chain is Exosome complex component RRP42 (RRP42), found in Saccharomyces cerevisiae (strain ATCC 204508 / S288c) (Baker's yeast).